The following is a 142-amino-acid chain: ATP synthase epsilon chain (142 aa).

The protein belongs to the ATPase epsilon chain family. As to quaternary structure, F-type ATPases have 2 components, CF(1) - the catalytic core - and CF(0) - the membrane proton channel. CF(1) has five subunits: alpha(3), beta(3), gamma(1), delta(1), epsilon(1). CF(0) has three main subunits: a, b and c.

The protein resides in the cell inner membrane. Its function is as follows. Produces ATP from ADP in the presence of a proton gradient across the membrane. The sequence is that of ATP synthase epsilon chain from Shewanella piezotolerans (strain WP3 / JCM 13877).